The primary structure comprises 95 residues: Acylphosphatase (95 aa).

Residues 9 to 95 (RLTAWVHGRV…KGGLTGFVER (87 aa)) form the Acylphosphatase-like domain. Active-site residues include Arg24 and Asn42.

The protein belongs to the acylphosphatase family.

It catalyses the reaction an acyl phosphate + H2O = a carboxylate + phosphate + H(+). This is Acylphosphatase (acyP) from Saccharopolyspora erythraea (strain ATCC 11635 / DSM 40517 / JCM 4748 / NBRC 13426 / NCIMB 8594 / NRRL 2338).